The following is a 225-amino-acid chain: uncharacterized protein (225 aa).

Over residues 1–19 the composition is skewed to polar residues; the sequence is MKFNSISPNKQHHTGFTTS. The tract at residues 1-21 is disordered; the sequence is MKFNSISPNKQHHTGFTTSNN.

This is an uncharacterized protein from Dictyostelium discoideum (Social amoeba).